Consider the following 192-residue polypeptide: MYQVVLGKVSTLSAGQLPDALIAQAPQGVRRASWLAGRVLLSRALSPLPEMVYGEQGKPAFSAGAPLWFNLSHSGDTIALLLSDEGEVGCDIEVIRPRDNWRSLANAVFSLGEHAEMEAERPEQQLAAFWRIWTRKEAIVKQRGGSAWQIVSVDSTLPSALSVSQCQLDTLSLAVCTPTPFTLTPQTITKAL.

This sequence belongs to the P-Pant transferase superfamily. Gsp/Sfp/HetI/AcpT family.

The enzyme catalyses apo-[ACP] + CoA = holo-[ACP] + adenosine 3',5'-bisphosphate + H(+). May be involved in an alternative pathway for phosphopantetheinyl transfer and holo-ACP synthesis. The native apo-protein substrate is unknown. In Salmonella typhimurium (strain LT2 / SGSC1412 / ATCC 700720), this protein is 4'-phosphopantetheinyl transferase AcpT (acpT).